Reading from the N-terminus, the 565-residue chain is Putative pentatricopeptide repeat-containing protein At3g05240 (565 aa).

PPR repeat units follow at residues 37–70 (NVIPLSRLIDFCTTCPETMNLSYARSVFESIDCP), 71–105 (SVYIWNSMIRGYSNSPNPDKALIFYQEMLRKGYSP), 106–140 (DYFTFPYVLKACSGLRDIQFGSCVHGFVVKTGFEV), 141–171 (NMYVSTCLLHMYMCCGEVNYGLRVFEDIPQW), 172–206 (NVVAWGSLISGFVNNNRFSDAIEAFREMQSNGVKA), 207–241 (NETIMVDLLVACGRCKDIVTGKWFHGFLQGLGFDP), 250–280 (NVILATSLIDMYAKCGDLRTARYLFDGMPER), 281–315 (TLVSWNSIITGYSQNGDAEEALCMFLDMLDLGIAP), 316–350 (DKVTFLSVIRASMIQGCSQLGQSIHAYVSKTGFVK), 351–381 (DAAIVCALVNMYAKTGDAESAKKAFEDLEKK), 382–416 (DTIAWTVVIIGLASHGHGNEALSIFQRMQEKGNAT), 418–448 (DGITYLGVLYACSHIGLVEEGQRYFAEMRDL), and 454–484 (TVEHYGCMVDILSRAGRFEEAERLVKTMPVK). The tract at residues 489–564 (IWGALLNGCD…VLGHSSVETM (76 aa)) is type E motif.

This sequence belongs to the PPR family. PCMP-E subfamily.

This is Putative pentatricopeptide repeat-containing protein At3g05240 (PCMP-E82) from Arabidopsis thaliana (Mouse-ear cress).